We begin with the raw amino-acid sequence, 920 residues long: Isoleucine--tRNA ligase (920 aa).

The short motif at 58 to 68 (PYANGHLHLGH) is the 'HIGH' region element. Residue Glu569 participates in L-isoleucyl-5'-AMP binding. A 'KMSKS' region motif is present at residues 610–614 (KMSKS). Residue Lys613 participates in ATP binding. 4 residues coordinate Zn(2+): Cys895, Cys898, Cys910, and Cys913.

Belongs to the class-I aminoacyl-tRNA synthetase family. IleS type 1 subfamily. In terms of assembly, monomer. Zn(2+) serves as cofactor.

It localises to the cytoplasm. It carries out the reaction tRNA(Ile) + L-isoleucine + ATP = L-isoleucyl-tRNA(Ile) + AMP + diphosphate. Its function is as follows. Catalyzes the attachment of isoleucine to tRNA(Ile). As IleRS can inadvertently accommodate and process structurally similar amino acids such as valine, to avoid such errors it has two additional distinct tRNA(Ile)-dependent editing activities. One activity is designated as 'pretransfer' editing and involves the hydrolysis of activated Val-AMP. The other activity is designated 'posttransfer' editing and involves deacylation of mischarged Val-tRNA(Ile). In Helicobacter pylori (strain HPAG1), this protein is Isoleucine--tRNA ligase.